We begin with the raw amino-acid sequence, 311 residues long: Phospho-N-acetylmuramoyl-pentapeptide-transferase (311 aa).

A run of 10 helical transmembrane segments spans residues 2–22 (ENNV…IEGF), 48–68 (GTPT…LLNF), 74–94 (SFLI…DDFM), 104–124 (ITAV…VYFI), 144–164 (LGWF…NAVN), 168–188 (GVDG…LIVG), 192–212 (VVYL…WHPA), 214–234 (IFMG…SFAL), 237–257 (LELF…SVII), and 288–308 (KIAF…IIGW).

Belongs to the glycosyltransferase 4 family. MraY subfamily. Mg(2+) serves as cofactor.

The protein resides in the cell inner membrane. The enzyme catalyses UDP-N-acetyl-alpha-D-muramoyl-L-alanyl-gamma-D-glutamyl-meso-2,6-diaminopimeloyl-D-alanyl-D-alanine + di-trans,octa-cis-undecaprenyl phosphate = di-trans,octa-cis-undecaprenyl diphospho-N-acetyl-alpha-D-muramoyl-L-alanyl-D-glutamyl-meso-2,6-diaminopimeloyl-D-alanyl-D-alanine + UMP. The protein operates within cell wall biogenesis; peptidoglycan biosynthesis. Catalyzes the initial step of the lipid cycle reactions in the biosynthesis of the cell wall peptidoglycan: transfers peptidoglycan precursor phospho-MurNAc-pentapeptide from UDP-MurNAc-pentapeptide onto the lipid carrier undecaprenyl phosphate, yielding undecaprenyl-pyrophosphoryl-MurNAc-pentapeptide, known as lipid I. The polypeptide is Phospho-N-acetylmuramoyl-pentapeptide-transferase (Kosmotoga olearia (strain ATCC BAA-1733 / DSM 21960 / TBF 19.5.1)).